Consider the following 179-residue polypeptide: Phospholipase A2 (179 aa).

The signal sequence occupies residues 1–21 (MHALRSSVLALWLCLHVSVRA). Positions 22–39 (WMTYRSANGLDEYEPEDR) are excised as a propeptide. Ca(2+)-binding residues include Trp47, Gly49, and Gly51. 5 disulfide bridges follow: Cys48-Cys70, Cys69-Cys109, Cys76-Cys102, Cys100-Cys133, and Cys142-Cys150. Residue His73 is part of the active site. Asp74 is a Ca(2+) binding site. Residue Asp103 is part of the active site.

It belongs to the phospholipase A2 family. Group III subfamily. Ca(2+) serves as cofactor. In terms of tissue distribution, expressed by the venom gland.

It is found in the secreted. The enzyme catalyses a 1,2-diacyl-sn-glycero-3-phosphocholine + H2O = a 1-acyl-sn-glycero-3-phosphocholine + a fatty acid + H(+). May potentiate Xylotoxin(1)-Xa1a DRG activation and cell lysis, since the orthologous A.mellifera PA2 potentiates Xylotoxin(1)-Xa1a DRG activation and cell lysis. In vivo, intraplantar injection in mice may potentiate spontaneous pain behaviors and paw swelling caused by Xylotoxin(1)-Xa1a, since the orthologous A.mellifera PA2 shows this effect. PLA2 catalyzes the calcium-dependent hydrolysis of the 2-acyl groups in 3-sn-phosphoglycerides. The sequence is that of Phospholipase A2 from Xylocopa aruana (Great carpenter bee).